The primary structure comprises 233 residues: Cysteine-rich venom protein (233 aa).

The first 12 residues, 1–12 (PILAAVLQQSSG), serve as a signal peptide directing secretion. Positions 31-159 (VDLHNSLRRS…PYSYFFVCQY (129 aa)) constitute an SCP domain. 8 cysteine pairs are disulfide-bonded: Cys68–Cys146, Cys85–Cys160, Cys141–Cys157, Cys179–Cys186, Cys182–Cys191, Cys195–Cys228, Cys204–Cys222, and Cys213–Cys226. A ShKT domain is found at 195–228 (CTRENKFTNCNTMVQQSSCQDNYMKTNCPASCFC).

The protein belongs to the CRISP family. Expressed by the venom gland.

The protein resides in the secreted. Functionally, blocks contraction of smooth muscle elicited by high potassium-induced depolarization, but does not block caffeine-stimulated contraction. May target voltage-gated calcium channels on smooth muscle. The polypeptide is Cysteine-rich venom protein (Trimeresurus stejnegeri (Chinese green tree viper)).